The chain runs to 365 residues: Chorismate synthase (365 aa).

Residues arginine 48 and arginine 54 each contribute to the NADP(+) site. FMN contacts are provided by residues 131 to 133, 243 to 244, glycine 288, 303 to 307, and arginine 329; these read RSS, NA, and KPTSS.

It belongs to the chorismate synthase family. Homotetramer. FMNH2 is required as a cofactor.

It catalyses the reaction 5-O-(1-carboxyvinyl)-3-phosphoshikimate = chorismate + phosphate. It functions in the pathway metabolic intermediate biosynthesis; chorismate biosynthesis; chorismate from D-erythrose 4-phosphate and phosphoenolpyruvate: step 7/7. Functionally, catalyzes the anti-1,4-elimination of the C-3 phosphate and the C-6 proR hydrogen from 5-enolpyruvylshikimate-3-phosphate (EPSP) to yield chorismate, which is the branch point compound that serves as the starting substrate for the three terminal pathways of aromatic amino acid biosynthesis. This reaction introduces a second double bond into the aromatic ring system. This Rhizobium etli (strain CIAT 652) protein is Chorismate synthase.